Here is a 320-residue protein sequence, read N- to C-terminus: Cyclin-D6-1 (320 aa).

Residues 279–320 are disordered; that stretch reads HHRSASSESERTTTVGSAANSADAKRRCMGPPRQWGVGGPDE.

It belongs to the cyclin family. Cyclin D subfamily.

The chain is Cyclin-D6-1 (CYCD6-1) from Oryza sativa subsp. japonica (Rice).